The chain runs to 264 residues: MLSHNTMVKQRKQQASAIMKEIHGNDVDVMHLGKKVSIPRDIMLEELSHLSNRGARLFKMRQRRSDKYTFENFQYETKAQINHNIAMQNEKLDGINLESGSQQAPFTPPNTPDPRSPPNPENIAPGYSGPLKEIPPERFNTTAVPKYYQSPWEQAISNDPELLEALYPKFFKPEGKAELPDYRSFNRVATPFGGFEKASKMVKFKVPDFDLLLLTDPRFMAFANPLSGRRSFNRTPKGWISENIPIVITTEPTEDNTIPESEDL.

R53 carries the omega-N-methylarginine modification. The tract at residues 98–134 (ESGSQQAPFTPPNTPDPRSPPNPENIAPGYSGPLKEI) is disordered. S101 is modified (phosphoserine). Positions 106–120 (FTPPNTPDPRSPPNP) are enriched in pro residues. 2 positions are modified to phosphothreonine: T107 and T111. S116 is subject to Phosphoserine.

This sequence belongs to the myozenin family. As to quaternary structure, interacts via its C-terminus with spectrin repeats 3 and 4 of ACTN2. Interacts with ACTN1, LDB3, MYOT and PPP3CA.

The protein localises to the cytoplasm. Its subcellular location is the myofibril. The protein resides in the sarcomere. It is found in the z line. Its function is as follows. Myozenins may serve as intracellular binding proteins involved in linking Z line proteins such as alpha-actinin, gamma-filamin, TCAP/telethonin, LDB3/ZASP and localizing calcineurin signaling to the sarcomere. Plays an important role in the modulation of calcineurin signaling. May play a role in myofibrillogenesis. The polypeptide is Myozenin-2 (MYOZ2) (Bos taurus (Bovine)).